Here is a 242-residue protein sequence, read N- to C-terminus: UPF0246 protein SPCG_1533 (242 aa).

It belongs to the UPF0246 family.

This is UPF0246 protein SPCG_1533 from Streptococcus pneumoniae (strain CGSP14).